A 405-amino-acid polypeptide reads, in one-letter code: Argininosuccinate synthase (405 aa).

ATP-binding positions include 10–18 and Ala38; that span reads AYSGGVDTS. Tyr89 serves as a coordination point for L-citrulline. Gly119 lines the ATP pocket. Residues Thr121, Asn125, and Asp126 each contribute to the L-aspartate site. Position 125 (Asn125) interacts with L-citrulline. 5 residues coordinate L-citrulline: Arg129, Ser177, Ser186, Glu262, and Tyr274.

The protein belongs to the argininosuccinate synthase family. Type 1 subfamily. Homotetramer.

The protein resides in the cytoplasm. It catalyses the reaction L-citrulline + L-aspartate + ATP = 2-(N(omega)-L-arginino)succinate + AMP + diphosphate + H(+). The protein operates within amino-acid biosynthesis; L-arginine biosynthesis; L-arginine from L-ornithine and carbamoyl phosphate: step 2/3. In Synechococcus sp. (strain RCC307), this protein is Argininosuccinate synthase.